The primary structure comprises 160 residues: Cyclic pyranopterin monophosphate synthase (160 aa).

Substrate is bound by residues 74-76 (LSH) and 112-113 (ME). D127 is a catalytic residue.

This sequence belongs to the MoaC family. As to quaternary structure, homohexamer; trimer of dimers.

The catalysed reaction is (8S)-3',8-cyclo-7,8-dihydroguanosine 5'-triphosphate = cyclic pyranopterin phosphate + diphosphate. Its pathway is cofactor biosynthesis; molybdopterin biosynthesis. Its function is as follows. Catalyzes the conversion of (8S)-3',8-cyclo-7,8-dihydroguanosine 5'-triphosphate to cyclic pyranopterin monophosphate (cPMP). This is Cyclic pyranopterin monophosphate synthase from Geobacter metallireducens (strain ATCC 53774 / DSM 7210 / GS-15).